Reading from the N-terminus, the 207-residue chain is Adenylyl-sulfate kinase (207 aa).

34-41 (GLSGSGKS) contacts ATP. S108 serves as the catalytic Phosphoserine intermediate.

It belongs to the APS kinase family.

It catalyses the reaction adenosine 5'-phosphosulfate + ATP = 3'-phosphoadenylyl sulfate + ADP + H(+). It participates in sulfur metabolism; hydrogen sulfide biosynthesis; sulfite from sulfate: step 2/3. Functionally, catalyzes the synthesis of activated sulfate. In Lactiplantibacillus plantarum (strain ATCC BAA-793 / NCIMB 8826 / WCFS1) (Lactobacillus plantarum), this protein is Adenylyl-sulfate kinase.